The primary structure comprises 319 residues: L-lactate dehydrogenase (319 aa).

Residues valine 17, aspartate 38, lysine 43, tyrosine 69, and 83–84 contribute to the NAD(+) site; that span reads GA. Residues glutamine 86, arginine 92, and 124-127 each bind substrate; that span reads NPVD. Residues 122–124 and serine 147 each bind NAD(+); that span reads ATN. Residue 152-155 coordinates substrate; it reads DTAR. Beta-D-fructose 1,6-bisphosphate-binding residues include arginine 157 and histidine 172. Catalysis depends on histidine 179, which acts as the Proton acceptor. Residue tyrosine 224 is modified to Phosphotyrosine. Position 233 (threonine 233) interacts with substrate.

Belongs to the LDH/MDH superfamily. LDH family. As to quaternary structure, homotetramer.

The protein localises to the cytoplasm. It carries out the reaction (S)-lactate + NAD(+) = pyruvate + NADH + H(+). The protein operates within fermentation; pyruvate fermentation to lactate; (S)-lactate from pyruvate: step 1/1. Allosterically activated by fructose 1,6-bisphosphate (FBP). In terms of biological role, catalyzes the conversion of lactate to pyruvate. The protein is L-lactate dehydrogenase of Bacillus licheniformis (strain ATCC 14580 / DSM 13 / JCM 2505 / CCUG 7422 / NBRC 12200 / NCIMB 9375 / NCTC 10341 / NRRL NRS-1264 / Gibson 46).